We begin with the raw amino-acid sequence, 157 residues long: uncharacterized protein (157 aa).

Lys-115 participates in a covalent cross-link: Isoglutamyl lysine isopeptide (Lys-Gln) (interchain with Q-Cter in protein Pup).

This is an uncharacterized protein from Mycolicibacterium smegmatis (strain ATCC 700084 / mc(2)155) (Mycobacterium smegmatis).